The primary structure comprises 478 residues: NADH-quinone oxidoreductase subunit N 1 (478 aa).

A run of 14 helical transmembrane segments spans residues 6-26, 33-53, 71-91, 99-119, 121-141, 156-176, 193-212, 244-264, 265-285, 299-319, 321-341, 364-384, 388-408, and 438-458; these read TVLP…SGVF, FAIT…LVAA, FADV…VTFN, FEFP…VSAS, LITL…LAAF, FVLG…VYGF, PTAA…GLAF, IAVF…VLGQ, WRDL…IGAI, IGHM…GVSG, LIYL…IIAM, FAFV…LAGF, FYVF…LGII, and AGVS…VFHP.

The protein belongs to the complex I subunit 2 family. As to quaternary structure, NDH-1 is composed of 14 different subunits. Subunits NuoA, H, J, K, L, M, N constitute the membrane sector of the complex.

The protein localises to the cell inner membrane. It carries out the reaction a quinone + NADH + 5 H(+)(in) = a quinol + NAD(+) + 4 H(+)(out). Its function is as follows. NDH-1 shuttles electrons from NADH, via FMN and iron-sulfur (Fe-S) centers, to quinones in the respiratory chain. The immediate electron acceptor for the enzyme in this species is believed to be ubiquinone. Couples the redox reaction to proton translocation (for every two electrons transferred, four hydrogen ions are translocated across the cytoplasmic membrane), and thus conserves the redox energy in a proton gradient. The sequence is that of NADH-quinone oxidoreductase subunit N 1 from Acidiphilium cryptum (strain JF-5).